Reading from the N-terminus, the 359-residue chain is Peptide chain release factor 1 (359 aa).

Gln-235 is modified (N5-methylglutamine).

It belongs to the prokaryotic/mitochondrial release factor family. In terms of processing, methylated by PrmC. Methylation increases the termination efficiency of RF1.

Its subcellular location is the cytoplasm. In terms of biological role, peptide chain release factor 1 directs the termination of translation in response to the peptide chain termination codons UAG and UAA. In Methylibium petroleiphilum (strain ATCC BAA-1232 / LMG 22953 / PM1), this protein is Peptide chain release factor 1.